The chain runs to 57 residues: Enolase (57 aa).

Glutamate 25 serves as the catalytic Proton donor.

Belongs to the enolase family. Mg(2+) serves as cofactor.

The protein resides in the cytoplasm. Its subcellular location is the secreted. It is found in the cell surface. The catalysed reaction is (2R)-2-phosphoglycerate = phosphoenolpyruvate + H2O. Its pathway is carbohydrate degradation; glycolysis; pyruvate from D-glyceraldehyde 3-phosphate: step 4/5. Its function is as follows. Catalyzes the reversible conversion of 2-phosphoglycerate (2-PG) into phosphoenolpyruvate (PEP). It is essential for the degradation of carbohydrates via glycolysis. The chain is Enolase from Clostridioides difficile (Peptoclostridium difficile).